The following is a 549-amino-acid chain: Eukaryotic translation initiation factor 3 subunit D (549 aa).

The tract at residues 101–130 is disordered; the sequence is QSYQRGRARGQRGRGARGARTPGGMTTLNK. The span at 106–117 shows a compositional bias: basic residues; it reads GRARGQRGRGAR. The tract at residues 277 to 291 is RNA gate; sequence EFDLLTVNETSVEPP. The tract at residues 521–549 is disordered; it reads ESDASEESGDEQADTPFAPLYSYGNSKRV. Residues 523 to 533 are compositionally biased toward acidic residues; sequence DASEESGDEQA.

Belongs to the eIF-3 subunit D family. In terms of assembly, component of the eukaryotic translation initiation factor 3 (eIF-3) complex.

The protein resides in the cytoplasm. Functionally, mRNA cap-binding component of the eukaryotic translation initiation factor 3 (eIF-3) complex, which is involved in protein synthesis of a specialized repertoire of mRNAs and, together with other initiation factors, stimulates binding of mRNA and methionyl-tRNAi to the 40S ribosome. The eIF-3 complex specifically targets and initiates translation of a subset of mRNAs involved in cell proliferation. In the eIF-3 complex, eif3d specifically recognizes and binds the 7-methylguanosine cap of a subset of mRNAs. This Bombyx mori (Silk moth) protein is Eukaryotic translation initiation factor 3 subunit D.